Consider the following 82-residue polypeptide: Polyferredoxin protein FwdG (82 aa).

2 consecutive 4Fe-4S ferredoxin-type domains span residues 4–33 and 51–80; these read YELVVYPERCHGCGNCVVSCPVNAKHPETW and VVTVVNQDLCGGCGACIEACPVNAIELVFK. Positions 13, 16, 19, 23, 60, 63, 66, and 70 each coordinate [4Fe-4S] cluster.

Requires [4Fe-4S] cluster as cofactor.

The sequence is that of Polyferredoxin protein FwdG (fwdG) from Methanocaldococcus jannaschii (strain ATCC 43067 / DSM 2661 / JAL-1 / JCM 10045 / NBRC 100440) (Methanococcus jannaschii).